The sequence spans 524 residues: Methyl-CpG-binding domain-containing protein 8 (524 aa).

Residues 45–60 show a composition bias toward low complexity; the sequence is CSSLSPSSSASLAASA. The tract at residues 45-151 is disordered; it reads CSSLSPSSSA…EEELEDNEGQ (107 aa). Residues 75 to 84 show a composition bias toward polar residues; sequence FNESAGSRKQ. Residues 106-116 are compositionally biased toward basic and acidic residues; it reads RQRDDSSREEQ. A compositionally biased stretch (acidic residues) spans 136 to 149; the sequence is EEEDEGEEELEDNE. An MBD domain is found at 334 to 406; it reads VVNACDYGGY…QHYYLQSDNK (73 aa).

Expressed in shoot meristems, roots (vasculature and tips), hypocotyls (vasculature), cotyledons (vasculature and hydathodes), young leaves, buds, flowers and stems. Detected in stomata.

The protein resides in the nucleus. Probable transcriptional regulator. May regulates developmental traits such as flowering time. The polypeptide is Methyl-CpG-binding domain-containing protein 8 (MBD8) (Arabidopsis thaliana (Mouse-ear cress)).